The sequence spans 591 residues: F420 non-reducing hydrogenase II large subunit (591 aa).

Glutamate 42 provides a ligand contact to Mg(2+). Cysteine 61, cysteine 64, cysteine 569, and cysteine 572 together coordinate Ni(2+). Cysteine 64 is a Fe cation binding site. Cysteine 572 lines the Fe cation pocket. Histidine 575 lines the Mg(2+) pocket.

It belongs to the [NiFe]/[NiFeSe] hydrogenase large subunit family. In terms of assembly, composed of a large subunit (VhtA), a small subunit (VhtG) and a cytochrome subunit (VhtC). The cofactor is Ni(2+). Fe cation is required as a cofactor.

It localises to the cell membrane. It catalyses the reaction methanophenazine + H2 = dihydromethanophenazine. Part of the F420 non-reducing hydrogenase II complex that catalyzes the reduction of methanophenazine to dihydromethanophenazine. The polypeptide is F420 non-reducing hydrogenase II large subunit (Methanosarcina mazei (strain ATCC BAA-159 / DSM 3647 / Goe1 / Go1 / JCM 11833 / OCM 88) (Methanosarcina frisia)).